The chain runs to 302 residues: Methionyl-tRNA formyltransferase (302 aa).

(6S)-5,6,7,8-tetrahydrofolate is bound at residue 108 to 111; the sequence is SLLP. The span at 279-288 shows a compositional bias: basic and acidic residues; that stretch reads KRPMEPEEFL. A disordered region spans residues 279–302; the sequence is KRPMEPEEFLRGFPLPEGSRAHTS.

This sequence belongs to the Fmt family.

The enzyme catalyses L-methionyl-tRNA(fMet) + (6R)-10-formyltetrahydrofolate = N-formyl-L-methionyl-tRNA(fMet) + (6S)-5,6,7,8-tetrahydrofolate + H(+). Its function is as follows. Attaches a formyl group to the free amino group of methionyl-tRNA(fMet). The formyl group appears to play a dual role in the initiator identity of N-formylmethionyl-tRNA by promoting its recognition by IF2 and preventing the misappropriation of this tRNA by the elongation apparatus. This Cereibacter sphaeroides (strain ATCC 17023 / DSM 158 / JCM 6121 / CCUG 31486 / LMG 2827 / NBRC 12203 / NCIMB 8253 / ATH 2.4.1.) (Rhodobacter sphaeroides) protein is Methionyl-tRNA formyltransferase.